Here is a 246-residue protein sequence, read N- to C-terminus: Probable transcriptional regulatory protein YebC (246 aa).

The segment at 1 to 20 is disordered; sequence MAGHSKWANTRHRKAAQDAK.

The protein belongs to the TACO1 family.

It localises to the cytoplasm. The protein is Probable transcriptional regulatory protein YebC of Escherichia coli O6:K15:H31 (strain 536 / UPEC).